Consider the following 373-residue polypeptide: MDFVQRFVIDRSFHLRYYSLDAYLYRAVDQVAWDADITHNRLFWDIWSAFMQPRSLVDAVETLSDYDPDEVAAAIEGMCESGIIEPVGLKDRQFDPLTVELSHVPQAWDYHLVSSRIDWINYLDGKDVKRQDLEQMDKHLSEEAVPSNFHKAANSRPKYDLPSLVPLTAFEFNNSASVAFGHEKAPLPNELSLDIITLLLNYAAAKTDTVNMYATGEHLRKAVPSGGARHPIEFYVVVGDEIAGIEAGVYHYNVRHHRLDAIEIASTSLKALQEASSVLPRSRSKPFGFAFIHTCRFERSMFRYREPRSYRVMQFDLGHIHANEVLAAKILGLDFSETFSVPESIVESVLTLDPFIESAMSAFVVHRHENHHD.

The protein to E.coli McbC which is involved in the processing of microcin B17 (MCCB17).

It localises to the cytoplasm. Its function is as follows. The actions of the proteins TfxB, TfxD and TfxF are implicated in the processing of the inactive trifolitoxin (TfxA) precursor into the active peptide. The polypeptide is Trifolitoxin-processing protein TfxB (tfxB) (Rhizobium leguminosarum bv. trifolii).